A 238-amino-acid chain; its full sequence is Small ribosomal subunit protein eS4 (238 aa).

Residues 38–109 (IPLALVIRDV…DERSYYALVP (72 aa)) enclose the S4 RNA-binding domain.

Belongs to the eukaryotic ribosomal protein eS4 family.

In Pyrobaculum neutrophilum (strain DSM 2338 / JCM 9278 / NBRC 100436 / V24Sta) (Thermoproteus neutrophilus), this protein is Small ribosomal subunit protein eS4.